A 262-amino-acid chain; its full sequence is Taurine import ATP-binding protein TauB (262 aa).

An ABC transporter domain is found at 4 to 233 (LELERISAQY…RYAAGESARA (230 aa)). Position 38-45 (38-45 (GPSGSGKT)) interacts with ATP.

This sequence belongs to the ABC transporter superfamily. Taurine importer (TC 3.A.1.17.1) family. In terms of assembly, the complex is composed of two ATP-binding proteins (TauB), two transmembrane proteins (TauC) and a solute-binding protein (TauA).

The protein resides in the cell inner membrane. The catalysed reaction is taurine(out) + ATP + H2O = taurine(in) + ADP + phosphate + H(+). In terms of biological role, part of the ABC transporter complex TauABC involved in taurine import. Responsible for energy coupling to the transport system. This chain is Taurine import ATP-binding protein TauB, found in Pseudomonas putida (Arthrobacter siderocapsulatus).